Consider the following 508-residue polypeptide: Photosystem II CP47 reaction center protein (508 aa).

Transmembrane regions (helical) follow at residues 21–36 (AVHL…WAGS), 101–115 (ILLS…IWHW), 140–156 (GIHL…FGAF), 203–218 (IAAG…FHLS), 237–252 (VLSS…AFVV), and 457–472 (WFAL…HGAR).

The protein belongs to the PsbB/PsbC family. PsbB subfamily. PSII is composed of 1 copy each of membrane proteins PsbA, PsbB, PsbC, PsbD, PsbE, PsbF, PsbH, PsbI, PsbJ, PsbK, PsbL, PsbM, PsbT, PsbX, PsbY, PsbZ, Psb30/Ycf12, at least 3 peripheral proteins of the oxygen-evolving complex and a large number of cofactors. It forms dimeric complexes. Requires Binds multiple chlorophylls. PSII binds additional chlorophylls, carotenoids and specific lipids. as cofactor.

The protein resides in the plastid. It is found in the chloroplast thylakoid membrane. In terms of biological role, one of the components of the core complex of photosystem II (PSII). It binds chlorophyll and helps catalyze the primary light-induced photochemical processes of PSII. PSII is a light-driven water:plastoquinone oxidoreductase, using light energy to abstract electrons from H(2)O, generating O(2) and a proton gradient subsequently used for ATP formation. The polypeptide is Photosystem II CP47 reaction center protein (Nephroselmis olivacea (Green alga)).